A 427-amino-acid polypeptide reads, in one-letter code: Tryptophan synthase beta chain (427 aa).

Residue lysine 100 is modified to N6-(pyridoxal phosphate)lysine.

It belongs to the TrpB family. Tetramer of two alpha and two beta chains. Pyridoxal 5'-phosphate serves as cofactor.

It carries out the reaction (1S,2R)-1-C-(indol-3-yl)glycerol 3-phosphate + L-serine = D-glyceraldehyde 3-phosphate + L-tryptophan + H2O. It participates in amino-acid biosynthesis; L-tryptophan biosynthesis; L-tryptophan from chorismate: step 5/5. Its function is as follows. The beta subunit is responsible for the synthesis of L-tryptophan from indole and L-serine. The chain is Tryptophan synthase beta chain (trpB) from Streptomyces coelicolor (strain ATCC BAA-471 / A3(2) / M145).